The sequence spans 226 residues: MKAVLLISGGMDSLVTTAIAAEEKLELAAMHVNYGQRTWQKELECFRRICNHYQIRHRLEIEAGYLAQTGGSSLTDPAMPVSGADLQGTDIPTSYVPFRNAGFLSMAVSWSEVIGAGKIFIGAVEEDSSGYPDCRQVFYDAFNRVIELGTRPDTAIEIVTPLISMQKCDIVLKGMELNAPFACSWSCYKSEGRACGVCDSCARRLRAFELTGVRDPIEYEVRPKYI.

7 to 17 (ISGGMDSLVTT) provides a ligand contact to ATP. Positions 187, 195, 198, and 201 each coordinate Zn(2+).

It belongs to the QueC family. It depends on Zn(2+) as a cofactor.

It catalyses the reaction 7-carboxy-7-deazaguanine + NH4(+) + ATP = 7-cyano-7-deazaguanine + ADP + phosphate + H2O + H(+). The protein operates within purine metabolism; 7-cyano-7-deazaguanine biosynthesis. Catalyzes the ATP-dependent conversion of 7-carboxy-7-deazaguanine (CDG) to 7-cyano-7-deazaguanine (preQ(0)). In Chlorobium limicola (strain DSM 245 / NBRC 103803 / 6330), this protein is 7-cyano-7-deazaguanine synthase.